Reading from the N-terminus, the 85-residue chain is MKVTLIAILTCAAVLVLHTTAAEELEAESQLMEVGMPDTELAAVDEERLFECSVSCEIEKEGNKDYKKKKCKGGWKYKFNMCVKV.

Positions 1–22 (MKVTLIAILTCAAVLVLHTTAA) are cleaved as a signal peptide. Residues 23 to 48 (EELEAESQLMEVGMPDTELAAVDEER) constitute a propeptide that is removed on maturation. Cys71 and Cys82 are disulfide-bonded.

Belongs to the neurotoxin 12 (Hwtx-2) family. 02 (Hwtx-2) subfamily. In terms of tissue distribution, expressed by the venom gland.

Its subcellular location is the secreted. In terms of biological role, postsynaptic neurotoxin. The protein is U4-theraphotoxin-Hhn1f of Cyriopagopus hainanus (Chinese bird spider).